We begin with the raw amino-acid sequence, 1537 residues long: Leucine-rich repeat-containing protein 7 (1537 aa).

LRR repeat units follow at residues 23–44 (IISVLDYSHCSLQQVPKEVFNF), 47–68 (TLEELYLDANQIEELPKQLFNC), 70–91 (ALRKLSIPDNDLSNLPTTIASL), 93–114 (NLKELDISKNGVQEFPENIKCC), 116–137 (CLTIIEASVNPISKLPDGFTQL), 139–161 (NLTQLYLNDAFLEFLPANFGRLV), 162–183 (KLRILELRENHLKTLPKSMHKL), 185–206 (QLERLDLGNNEFGELPEVLDQI), 208–229 (NLRELWMDNNALQVLPGSIGKL), 231–253 (MLVYLDMSKNRIETVDMDISGCE), 254–275 (ALEDLLLSSNMLQQLPDSIGLL), 277–298 (KLTTLKVDDNQLTMLPNTIGNL), 300–321 (LLEEFDCSCNELESLPSTIGYL), 323–344 (SLRTLAVDENFLPELPREIGSC), 346–367 (NVTVMSLRSNKLEFLPEEIGQM), 369–391 (KLRVLNLSDNRLKNLPFSFTKLK), and 392–413 (ELAALWLSDNQSKALIPLQTEA). Phosphoserine occurs at positions 439, 441, and 443. A compositionally biased stretch (basic and acidic residues) spans 663–676 (KKESTDESEVDKTH). Disordered regions lie at residues 663 to 709 (KKES…VGSL), 730 to 759 (FPQPLDSKPLLSQREAVPPGNIPQRPDRLP), 786 to 810 (AENANSNPLLSSKSRSTSSHGRRPL), and 824 to 892 (EQST…SPGV). A compositionally biased stretch (polar residues) spans 677-709 (CLNNSVSSGTYSDYSPSQASSGSSNTRVKVGSL). Low complexity predominate over residues 790-804 (NSNPLLSSKSRSTSS). The residue at position 831 (T831) is a Phosphothreonine. The residue at position 850 (S850) is a Phosphoserine. Low complexity predominate over residues 859–871 (PSKLETTPTTSPL). T865 is modified (phosphothreonine). Position 869 is a phosphoserine (S869). Residues 872 to 882 (PERKEHIKEST) are compositionally biased toward basic and acidic residues. A phosphoserine mark is found at S947, S949, and S1118. Residues 1136-1159 (ELPPTDRYGRPPYRGGLDRQSSVT) form a disordered region. R1149 is modified (omega-N-methylarginine). Position 1233 is a phosphoserine (S1233). Disordered stretches follow at residues 1234-1265 (DYNLGNYGDKPSDNSDLKTRPTPVKGEESCGK) and 1331-1360 (QKTPSQQSNILDNGQEDVSPSGQWNPYPLG). Residues 1243–1263 (KPSDNSDLKTRPTPVKGEESC) show a composition bias toward basic and acidic residues. Positions 1332–1354 (KTPSQQSNILDNGQEDVSPSGQW) are enriched in polar residues. A phosphoserine mark is found at S1335 and S1439. In terms of domain architecture, PDZ spans 1445–1535 (EQFCVRIEKN…TVDLVIQREL (91 aa)).

The protein belongs to the LAP (LRR and PDZ) protein family. In terms of assembly, interacts with CNKSR2 and DLG4. Interacts with CTNND2/Catenin delta-2. Forms a complex with N-cadherin through CTNND2. Interacts with CAMK2A. Brain-specific. Isoform 3 is ubiquitously expressed.

The protein localises to the cytoplasm. Its subcellular location is the postsynaptic density. Required for normal synaptic spine architecture and function. Necessary for DISC1 and GRM5 localization to postsynaptic density complexes and for both N-methyl D-aspartate receptor-dependent and metabotropic glutamate receptor-dependent long term depression. This chain is Leucine-rich repeat-containing protein 7 (LRRC7), found in Homo sapiens (Human).